Reading from the N-terminus, the 29-residue chain is Cysteine-rich venom protein 25-A (29 aa).

The protein belongs to the CRISP family. Contains 8 disulfide bonds. Expressed by the venom gland.

Its subcellular location is the secreted. In Naja haje haje (Egyptian cobra), this protein is Cysteine-rich venom protein 25-A.